A 258-amino-acid chain; its full sequence is Na(+)-translocating NADH-quinone reductase subunit C (258 aa).

A helical transmembrane segment spans residues 14–34 (LIVVLAVSLICSVIVAGAVVG). Ser-226 carries the FMN phosphoryl serine modification.

The protein belongs to the NqrC family. In terms of assembly, composed of six subunits; NqrA, NqrB, NqrC, NqrD, NqrE and NqrF. FMN is required as a cofactor.

The protein localises to the cell inner membrane. It catalyses the reaction a ubiquinone + n Na(+)(in) + NADH + H(+) = a ubiquinol + n Na(+)(out) + NAD(+). Functionally, NQR complex catalyzes the reduction of ubiquinone-1 to ubiquinol by two successive reactions, coupled with the transport of Na(+) ions from the cytoplasm to the periplasm. NqrA to NqrE are probably involved in the second step, the conversion of ubisemiquinone to ubiquinol. The chain is Na(+)-translocating NADH-quinone reductase subunit C from Neisseria meningitidis serogroup A / serotype 4A (strain DSM 15465 / Z2491).